The following is a 341-amino-acid chain: Tubulin beta chain (341 aa).

Residues S64, G68, T69, G70, N130, and N152 each coordinate GTP.

The protein belongs to the tubulin family. In terms of assembly, dimer of alpha and beta chains. A typical microtubule is a hollow water-filled tube with an outer diameter of 25 nm and an inner diameter of 15 nM. Alpha-beta heterodimers associate head-to-tail to form protofilaments running lengthwise along the microtubule wall with the beta-tubulin subunit facing the microtubule plus end conferring a structural polarity. Microtubules usually have 13 protofilaments but different protofilament numbers can be found in some organisms and specialized cells. Mg(2+) serves as cofactor.

It localises to the cytoplasm. It is found in the cytoskeleton. Its function is as follows. Tubulin is the major constituent of microtubules, a cylinder consisting of laterally associated linear protofilaments composed of alpha- and beta-tubulin heterodimers. Microtubules grow by the addition of GTP-tubulin dimers to the microtubule end, where a stabilizing cap forms. Below the cap, tubulin dimers are in GDP-bound state, owing to GTPase activity of alpha-tubulin. This Haliotis discus (Abalone) protein is Tubulin beta chain.